We begin with the raw amino-acid sequence, 292 residues long: 4-hydroxy-tetrahydrodipicolinate synthase (292 aa).

Thr-45 is a pyruvate binding site. The Proton donor/acceptor role is filled by Tyr-133. The active-site Schiff-base intermediate with substrate is Lys-161. Ile-203 contacts pyruvate.

Belongs to the DapA family. As to quaternary structure, homotetramer; dimer of dimers.

It localises to the cytoplasm. It carries out the reaction L-aspartate 4-semialdehyde + pyruvate = (2S,4S)-4-hydroxy-2,3,4,5-tetrahydrodipicolinate + H2O + H(+). Its pathway is amino-acid biosynthesis; L-lysine biosynthesis via DAP pathway; (S)-tetrahydrodipicolinate from L-aspartate: step 3/4. Its function is as follows. Catalyzes the condensation of (S)-aspartate-beta-semialdehyde [(S)-ASA] and pyruvate to 4-hydroxy-tetrahydrodipicolinate (HTPA). The sequence is that of 4-hydroxy-tetrahydrodipicolinate synthase from Vibrio vulnificus (strain CMCP6).